The primary structure comprises 171 residues: Protein GrpE (171 aa).

Positions 1 to 22 (MNHEHPDIESQQSAADAAAAAG) are disordered.

This sequence belongs to the GrpE family. In terms of assembly, homodimer.

The protein resides in the cytoplasm. In terms of biological role, participates actively in the response to hyperosmotic and heat shock by preventing the aggregation of stress-denatured proteins, in association with DnaK and GrpE. It is the nucleotide exchange factor for DnaK and may function as a thermosensor. Unfolded proteins bind initially to DnaJ; upon interaction with the DnaJ-bound protein, DnaK hydrolyzes its bound ATP, resulting in the formation of a stable complex. GrpE releases ADP from DnaK; ATP binding to DnaK triggers the release of the substrate protein, thus completing the reaction cycle. Several rounds of ATP-dependent interactions between DnaJ, DnaK and GrpE are required for fully efficient folding. The chain is Protein GrpE from Stenotrophomonas maltophilia (strain R551-3).